Here is a 356-residue protein sequence, read N- to C-terminus: Phosphoribosyl pyrophosphate synthase-associated protein 1 (356 aa).

N-acetylmethionine is present on Met-1. Phosphoserine is present on residues Ser-177 and Ser-215.

This sequence belongs to the ribose-phosphate pyrophosphokinase family. As to quaternary structure, binds to PRPS1 and PRPS2.

Its function is as follows. Seems to play a negative regulatory role in 5-phosphoribose 1-diphosphate synthesis. The protein is Phosphoribosyl pyrophosphate synthase-associated protein 1 (PRPSAP1) of Bos taurus (Bovine).